The following is a 279-amino-acid chain: Protein NipSnap homolog 1 (279 aa).

This sequence belongs to the NipSnap family.

It is found in the mitochondrion matrix. Its function is as follows. Protein involved in mitophagy. Accumulates on the mitochondria surface in response to mitochondrial depolarization and acts as a 'eat me' signal by recruiting proteins involved in selective autophagy. The sequence is that of Protein NipSnap homolog 1 from Danio rerio (Zebrafish).